The following is a 1147-amino-acid chain: Multiple epidermal growth factor-like domains protein 10 (1147 aa).

The N-terminal stretch at 1–25 (MAISSSSCLGLICSLLCHWVGTASS) is a signal peptide. Positions 1–857 (MAISSSSCLG…ALPADSYQIG (857 aa)) are necessary for interaction with AP2M1, self-assembly and formation of the irregular, mosaic-like adhesion pattern. The Extracellular segment spans residues 26 to 857 (LNLEDPNVCS…ALPADSYQIG (832 aa)). The EMI domain occupies 30-107 (DPNVCSHWES…FYESRDMCVP (78 aa)). 47 cysteine pairs are disulfide-bonded: Cys34/Cys95, Cys60/Cys69, Cys94/Cys105, Cys109/Cys124, Cys126/Cys135, Cys148/Cys160, Cys154/Cys167, Cys169/Cys178, Cys191/Cys203, Cys197/Cys210, Cys212/Cys221, Cys234/Cys246, Cys240/Cys253, Cys255/Cys264, Cys281/Cys289, Cys283/Cys296, Cys298/Cys307, Cys320/Cys332, Cys326/Cys339, Cys341/Cys350, Cys409/Cys421, Cys415/Cys428, Cys430/Cys439, Cys456/Cys464, Cys458/Cys471, Cys473/Cys482, Cys495/Cys507, Cys501/Cys514, Cys516/Cys525, Cys542/Cys550, Cys544/Cys557, Cys559/Cys568, Cys581/Cys593, Cys587/Cys600, Cys602/Cys611, Cys669/Cys681, Cys675/Cys688, Cys690/Cys699, Cys716/Cys724, Cys718/Cys731, Cys733/Cys742, Cys755/Cys767, Cys761/Cys774, Cys776/Cys785, Cys802/Cys810, Cys804/Cys817, and Cys819/Cys828. EGF-like domains are found at residues 101–136 (SRDMCVPHCADKCVHGRCIAPNTCQCEPGWGGTNCS), 144–179 (WGPHCSSRCQCKNRALCNPITGACHCAAGYRGWRCE), 187–222 (YGNDCHQRCQCQNGATCDHITGECRCSPGYTGAFCE), 230–265 (HGPHCEQRCPCQNGGVCHHVTGECSCPSGWMGTVCG), 278–308 (SQECQCHNGGTCDAATGQCHCSPGYTGERCQ), 316–351 (YGVRCAEACRCVNGGKCYHVSGTCLCEAGFSGELCE), 405–440 (YGEACQQICSCQNGADCDSVTGRCACAPGFKGTDCS), 453–483 (SSRCGCKNDAVCSPVDGSCICKAGWHGVDCS), 491–526 (WGFGCNLTCQCLNGGACNTLDGTCTCAPGWRGAKCE), 539–569 (AERCDCSHADGCHPTTGHCRCLPGWSGVHCD), 577–612 (WGPNCSLPCYCKNGASCSPDDGICECAPGFRGTTCQ), 665–700 (FGKNCAGVCTCTNNGTCNPIDRSCQCYPGWIGSDCS), 713–743 (IHTCNCHNGAFCSAYDGECKCTPGWTGLYCT), 751–786 (YGKDCALICQCQNGADCDHISGQCTCRTGFMGRHCE), and 799–829 (RQICDCLNNSTCDHITGTCYCSPGWKGARCD). Residue Asn134 is glycosylated (N-linked (GlcNAc...) asparagine). Asn496 carries N-linked (GlcNAc...) asparagine glycosylation. Residues 858–878 (AIAGIVVLVLVVLFLLALFII) traverse the membrane as a helical segment. Residues 879–1147 (YRHKQKRKES…STSSSSSSSE (269 aa)) are Cytoplasmic-facing. A necessary for formation of large intracellular vacuoles region spans residues 945 to 1147 (RDRMTIAKSK…STSSSSSSSE (203 aa)). Tyr1030 is modified (phosphotyrosine). Positions 1093-1147 (HVTQDPYDLPKNSHIPCHYDLLPVRDSSSSPKREDGGGSNSTSSNSTSSSSSSSE) are disordered. Residues 1132 to 1147 (NSTSSNSTSSSSSSSE) show a composition bias toward low complexity.

It belongs to the MEGF family. As to quaternary structure, homomer. Interacts with GULP1 and ABCA1. Interacts with AP2M1. Does not interact with MEGF11. Binds with high affinity to complement C1q. Interacts (via the cytoplasmic domain) with NOTCH1 (via NICD domain). In terms of processing, ubiquitinated; mono- and polyubiquitinated forms are detected. Phosphorylated on tyrosine residues. Phosphorylation at Tyr-1030 may be important for muscle cell proliferation. As to expression, expressed in cerebellum (at protein level). Expressed in kidney, stellate cells of the cerebellum and macrophage cell lines.

The protein localises to the cell membrane. Its subcellular location is the cell projection. It is found in the phagocytic cup. Functionally, membrane receptor involved in phagocytosis by macrophages and astrocytes of apoptotic cells. Receptor for C1q, an eat-me signal, that binds phosphatidylserine expressed on the surface of apoptotic cells. Cooperates with ABCA1 within the process of engulfment. Promotes the formation of large intracellular vacuoles and may be responsible for the uptake of amyloid-beta peptides. Necessary for astrocyte-dependent apoptotic neuron clearance in the developing cerebellum. Plays a role in muscle cell proliferation, adhesion and motility. Is also an essential factor in the regulation of myogenesis. Controls the balance between skeletal muscle satellite cells proliferation and differentiation through regulation of the notch signaling pathway. May also function in the mosaic spacing of specific neuron subtypes in the retina through homotypic retinal neuron repulsion. Mosaics provide a mechanism to distribute each cell type evenly across the retina, ensuring that all parts of the visual field have access to a full set of processing elements. The sequence is that of Multiple epidermal growth factor-like domains protein 10 from Mus musculus (Mouse).